The sequence spans 227 residues: UPF0173 metal-dependent hydrolase BC_4613 (227 aa).

It belongs to the UPF0173 family.

This chain is UPF0173 metal-dependent hydrolase BC_4613, found in Bacillus cereus (strain ATCC 14579 / DSM 31 / CCUG 7414 / JCM 2152 / NBRC 15305 / NCIMB 9373 / NCTC 2599 / NRRL B-3711).